A 272-amino-acid chain; its full sequence is Shikimate dehydrogenase (NADP(+)) (272 aa).

Shikimate contacts are provided by residues 14–16 (SLS) and Thr61. Catalysis depends on Lys65, which acts as the Proton acceptor. Asp102 is a shikimate binding site. NADP(+) contacts are provided by residues 127–131 (GAGGA), 151–156 (NRTPSK), and Leu215. Tyr217 contacts shikimate. Gly239 lines the NADP(+) pocket.

Belongs to the shikimate dehydrogenase family. Homodimer.

It carries out the reaction shikimate + NADP(+) = 3-dehydroshikimate + NADPH + H(+). The protein operates within metabolic intermediate biosynthesis; chorismate biosynthesis; chorismate from D-erythrose 4-phosphate and phosphoenolpyruvate: step 4/7. Involved in the biosynthesis of the chorismate, which leads to the biosynthesis of aromatic amino acids. Catalyzes the reversible NADPH linked reduction of 3-dehydroshikimate (DHSA) to yield shikimate (SA). The chain is Shikimate dehydrogenase (NADP(+)) from Coxiella burnetii (strain Dugway 5J108-111).